A 1256-amino-acid polypeptide reads, in one-letter code: MRKTPSHTEKKMVYSIRSLKNGTGSVLIGASLVLLAMATPTISSDESTPTTNEPNNRNTTTLAQPLTDTAADSGKNESDISSPRNANASLEKTEEKPATEPTTSTSPVTTETKAEEPIEDNYFRIHVKKLPEENKDAQGLWTWDDVEKPSENWPNGALSFKDAKKDDYGYYLDVKLKGEQAKKISFLINNTAGKNLTGDKSVEKLVPKMNEAWLDQDYKVFSYEPQPAGTVRVNYYRTDGNYDKKSLWYWGDVKNPSSAQWPDGTDFTATGKYGRYIDIPLNEAAREFGFLLLDESKQGDDVKIRKENYKFTDLKNHSQIFLKDDDESIYTNPYYVHDIRMTGAQHVGTSSIESSFSTLVGAKKEDILKHSNITNHLGNKVTITDVAIDEAGKKVTYSGDFSDTKHPYTVSYNSDQFTTKTSWHLKDETYSYDGKLGADLKEEGKQVDLTLWSPSADKVSVVVYDKNDPDKVVGTVALEKGERGTWKQTLDSTNKLGITDFTGYYYQYQIERQGKTVLALDPYAKSLAAWNSDDAKIDDAHKVAKAAFVDPAKLGPQDLTYGKIHNFKTREDAVIYEAHVRDFTSDPAIAKDLTKPFGTFEAFIEKLDYLKDLGVTHIQLLPVLSYYFVNELKNHERLSDYASSNSNYNWGYDPQNYFSLTGMYSSDPKNPEKRIAEFKNLINEIHKRGMGAILDVVYNHTAKVDIFEDLEPNYYHFMDADGTPRTSFGGGRLGTTHHMTKRLLVDSIKYLVDTYKVDGFRFDMMGDHDAASIEEAYKAARALNPNLIMLGEGWRTYAGDENMPTKAADQDWMKHTDTVAVFSDDIRNNLKSGYPNEGQPAFITGGKRDVNTIFKNLIAQPTNFEADSPGDVIQYIAAHDNLTLFDIIAQSIKKDPSKAENYAEIHRRLRLGNLMVLTAQGTPFIHSGQEYGRTKQFRDPAYKTPVAEDKVPNKSHLLRDKDGNPFDYPYFIHDSYDSSDAVNKFDWTKATDGKAYPENVKSRDYMKGLIALRQSTDAFRLKSLQDIKDRVHLITVPGQNGVEKEDVVIGYQITAPNGDIYAVFVNADEKAREFNLGTAFAHLRNAEVLADENQAGSVGIANPKGLEWTEKGLKLNALTATVLRVSQNGTSHESTAEEKPDSTPSKPEHQDPAPEARPDSTKPDAKVADAENKPSQATADSQAEQPAQEAQASSVKEAVQNESVENSSKKNIPATPDRQAELPNTGIKNENKLLFAGISLLALLGLGFLLKNKKEN.

A signal peptide spans 1-44; sequence MRKTPSHTEKKMVYSIRSLKNGTGSVLIGASLVLLAMATPTISS. Residues 42 to 117 are disordered; sequence ISSDESTPTT…VTTETKAEEP (76 aa). Low complexity predominate over residues 48-61; the sequence is TPTTNEPNNRNTTT. Residues 79 to 90 are compositionally biased toward polar residues; the sequence is DISSPRNANASL. Low complexity predominate over residues 99–111; that stretch reads TEPTTSTSPVTTE. Residues 141–143, Trp-153, Asp-199, 248–250, Trp-261, Lys-303, and Asn-308 contribute to the substrate site; these read WTW and WYW. Positions 646 and 648 each coordinate Ca(2+). Substrate contacts are provided by residues 652-653 and Phe-728; that span reads YD. The active-site Nucleophile is Asp-763. Glu-792 (proton donor) is an active-site residue. Trp-794 serves as a coordination point for substrate. Residues Met-813, Thr-816, and Asp-817 each contribute to the Ca(2+) site. Positions 824, 827, and 834 each coordinate substrate. Residues Asp-867 and Asp-871 each coordinate Ca(2+). Substrate contacts are provided by residues Asn-881, Lys-954, and 974 to 976; that span reads DSY. Position 977 (Asp-977) interacts with Ca(2+). The tract at residues 1126 to 1224 is disordered; sequence SQNGTSHEST…TPDRQAELPN (99 aa). Positions 1134 to 1172 are enriched in basic and acidic residues; that stretch reads STAEEKPDSTPSKPEHQDPAPEARPDSTKPDAKVADAEN. Residues 1181–1194 are compositionally biased toward low complexity; the sequence is SQAEQPAQEAQASS. Polar residues predominate over residues 1200–1210; it reads QNESVENSSKK. An LPXTG sorting signal motif is present at residues 1222–1226; sequence LPNTG. The residue at position 1225 (Thr-1225) is a Pentaglycyl murein peptidoglycan amidated threonine. Positions 1226–1256 are cleaved as a propeptide — removed by sortase; that stretch reads GIKNENKLLFAGISLLALLGLGFLLKNKKEN.

The protein belongs to the glycosyl hydrolase 13 family.

It localises to the secreted. Its subcellular location is the cell wall. The protein resides in the cell surface. It carries out the reaction Hydrolysis of (1-&gt;6)-alpha-D-glucosidic linkages in pullulan, amylopectin and glycogen, and in the alpha- and beta-limit dextrins of amylopectin and glycogen.. With respect to regulation, inhibited by 4-O-alpha-D-glucopyranosylmoranoline (G1M). Functionally, virulence factor. Involved in the degradation of glycogen of the mammalian host cells. Hydrolyzes the alpha-1,6-branchpoints of glycogen. Hydrolyzes pullulan. Does not hydrolyze dextran. Binds to mouse lung alveolar type II cells that are rich in glycogen stores. Is an alpha-glucan-specific carbohydrate-binding protein, which binds to amylose (pure alpha-(1,4)-linked glucose), amylopectin (alpha-(1,4)-linked glucose with alpha-(1,6) branch points), pullulan (linear polymer of mixed alpha-(1,4)- and alpha-(1,6)-linked glucose) and glycogen (similar to amylopectin with more frequent alpha-(1,6) branch points) in vitro. Does not bind to dextran (a linear polymer of alpha-(1,6)-linked glucose). This chain is Pullulanase A, found in Streptococcus pneumoniae serotype 2 (strain D39 / NCTC 7466).